A 1053-amino-acid polypeptide reads, in one-letter code: Translation initiation factor IF-2 (1053 aa).

Positions 1-20 (MSESKNSGENTLSVTPTKTL) are enriched in polar residues. The disordered stretch occupies residues 1-442 (MSESKNSGEN…TATGGEEEER (442 aa)). Composition is skewed to low complexity over residues 64–76 (EAAP…ATVT) and 83–102 (RPAA…AAVP). Composition is skewed to pro residues over residues 131–141 (PAQPKAEPVPA) and 150–161 (APVPPVPAPSAP). Residues 178 to 220 (PVSQAKPIQTAPVQTAPAAQASASQTTGPRPVAAGPRPATGAA) show a composition bias toward low complexity. Over residues 255 to 264 (GGRGGPGRGE) the composition is skewed to gly residues. 2 stretches are compositionally biased toward basic and acidic residues: residues 279-288 (LTDEEREARA) and 295-353 (RIRE…EAKR). Residues 375 to 386 (TATAAAPAAAAP) show a composition bias toward low complexity. In terms of domain architecture, tr-type G spans 550-720 (PRPPVVTIMG…ALQAELLDLK (171 aa)). Positions 559 to 566 (GHVDHGKT) are G1. 559 to 566 (GHVDHGKT) provides a ligand contact to GTP. The tract at residues 584–588 (GITQH) is G2. The G3 stretch occupies residues 606-609 (DTPG). Residues 606 to 610 (DTPGH) and 660 to 663 (NKID) contribute to the GTP site. A G4 region spans residues 660–663 (NKID). Residues 696–698 (SAT) form a G5 region.

This sequence belongs to the TRAFAC class translation factor GTPase superfamily. Classic translation factor GTPase family. IF-2 subfamily.

It is found in the cytoplasm. Functionally, one of the essential components for the initiation of protein synthesis. Protects formylmethionyl-tRNA from spontaneous hydrolysis and promotes its binding to the 30S ribosomal subunits. Also involved in the hydrolysis of GTP during the formation of the 70S ribosomal complex. This chain is Translation initiation factor IF-2, found in Beijerinckia indica subsp. indica (strain ATCC 9039 / DSM 1715 / NCIMB 8712).